The following is a 125-amino-acid chain: Splicing factor 3B subunit 6 (125 aa).

The segment at 16 to 29 (EVNRILYIRNLPYK) is interaction with pre-mRNA branch site. Residues 19–94 (RILYIRNLPY…RYLVVLYYNA (76 aa)) form the RRM domain. At Lys-29 the chain carries N6-acetyllysine; alternate. Residue Lys-29 forms a Glycyl lysine isopeptide (Lys-Gly) (interchain with G-Cter in SUMO2); alternate linkage. N6-acetyllysine is present on Lys-41.

As to quaternary structure, component of the 17S U2 SnRNP complex, a ribonucleoprotein complex that contains small nuclear RNA (snRNA) U2 and a number of specific proteins. Part of the SF3B subcomplex of the 17S U2 SnRNP complex. SF3B associates with the splicing subcomplex SF3A and a 12S RNA unit to form the U2 small nuclear ribonucleoproteins complex (U2 snRNP). Within the SF3B complex interacts directly with SF3B1. Component of the minor spliceosome, which splices U12-type introns.

The protein resides in the nucleus. Component of the 17S U2 SnRNP complex of the spliceosome, a large ribonucleoprotein complex that removes introns from transcribed pre-mRNAs. The 17S U2 SnRNP complex (1) directly participates in early spliceosome assembly and (2) mediates recognition of the intron branch site during pre-mRNA splicing by promoting the selection of the pre-mRNA branch-site adenosine, the nucleophile for the first step of splicing. Within the 17S U2 SnRNP complex, SF3B6 is part of the SF3B subcomplex, which is required for 'A' complex assembly formed by the stable binding of U2 snRNP to the branchpoint sequence in pre-mRNA. Sequence independent binding of SF3A and SF3B subcomplexes upstream of the branch site is essential, it may anchor U2 snRNP to the pre-mRNA. Within the 17S U2 SnRNP complex, SF3B6 directly contacts the pre-mRNA branch site adenosine for the first catalytic step of splicing. SF3B6 stabilizes the intron branch site-U2 snRNA duplex, thereby promoting-binding of introns with poor sequence complementarity. Also acts as a component of the minor spliceosome, which is involved in the splicing of U12-type introns in pre-mRNAs. This chain is Splicing factor 3B subunit 6 (Sf3b6), found in Mus musculus (Mouse).